Here is a 762-residue protein sequence, read N- to C-terminus: Ribosome-releasing factor 2, mitochondrial (762 aa).

Residues 1–35 (MLLSLTFPVLRGCTGHLVNRSLQAPRWRVTWKRSY) constitute a mitochondrion transit peptide. One can recognise a tr-type G domain in the interval 54–341 (SKIRNIGIMA…AITAYLPAPN (288 aa)). GTP contacts are provided by residues 63–70 (AHIDAGKT), 127–131 (DTPGH), and 181–184 (NKMD).

It belongs to the TRAFAC class translation factor GTPase superfamily. Classic translation factor GTPase family. EF-G/EF-2 subfamily.

The protein resides in the mitochondrion. It carries out the reaction GTP + H2O = GDP + phosphate + H(+). Its function is as follows. Mitochondrial GTPase that mediates the disassembly of ribosomes from messenger RNA at the termination of mitochondrial protein biosynthesis. Acts in collaboration with mrrf. GTP hydrolysis follows the ribosome disassembly and probably occurs on the ribosome large subunit. Not involved in the GTP-dependent ribosomal translocation step during translation elongation. This is Ribosome-releasing factor 2, mitochondrial (gfm2) from Danio rerio (Zebrafish).